The primary structure comprises 413 residues: Peptidase T (413 aa).

A Zn(2+)-binding site is contributed by His84. Asp86 is an active-site residue. Asp147 lines the Zn(2+) pocket. The active-site Proton acceptor is Glu181. The Zn(2+) site is built by Glu182, Asp204, and His386.

The protein belongs to the peptidase M20B family. Zn(2+) is required as a cofactor.

Its subcellular location is the cytoplasm. It catalyses the reaction Release of the N-terminal residue from a tripeptide.. Cleaves the N-terminal amino acid of tripeptides. This is Peptidase T from Ligilactobacillus salivarius (strain UCC118) (Lactobacillus salivarius).